The sequence spans 200 residues: Small ribosomal subunit protein uS4 (200 aa).

The segment at 1 to 43 is disordered; that stretch reads MARYTGPRGRRDRRAGVMLSSMRKNPLEKKPYPPGEHGRDRQR. Over residues 25-43 the composition is skewed to basic and acidic residues; it reads NPLEKKPYPPGEHGRDRQR. The S4 RNA-binding domain occupies 92 to 158; it reads LRMDNVVYRM…QPIQEAVEQV (67 aa).

It belongs to the universal ribosomal protein uS4 family. Part of the 30S ribosomal subunit. Contacts protein S5. The interaction surface between S4 and S5 is involved in control of translational fidelity.

Functionally, one of the primary rRNA binding proteins, it binds directly to 16S rRNA where it nucleates assembly of the body of the 30S subunit. Its function is as follows. With S5 and S12 plays an important role in translational accuracy. In Rubrobacter xylanophilus (strain DSM 9941 / JCM 11954 / NBRC 16129 / PRD-1), this protein is Small ribosomal subunit protein uS4.